A 235-amino-acid polypeptide reads, in one-letter code: Phosphoribosylaminoimidazole-succinocarboxamide synthase (235 aa).

The protein belongs to the SAICAR synthetase family.

It carries out the reaction 5-amino-1-(5-phospho-D-ribosyl)imidazole-4-carboxylate + L-aspartate + ATP = (2S)-2-[5-amino-1-(5-phospho-beta-D-ribosyl)imidazole-4-carboxamido]succinate + ADP + phosphate + 2 H(+). Its pathway is purine metabolism; IMP biosynthesis via de novo pathway; 5-amino-1-(5-phospho-D-ribosyl)imidazole-4-carboxamide from 5-amino-1-(5-phospho-D-ribosyl)imidazole-4-carboxylate: step 1/2. The protein is Phosphoribosylaminoimidazole-succinocarboxamide synthase of Chloroherpeton thalassium (strain ATCC 35110 / GB-78).